The sequence spans 96 residues: Large ribosomal subunit protein bL25 (96 aa).

This sequence belongs to the bacterial ribosomal protein bL25 family. In terms of assembly, part of the 50S ribosomal subunit; part of the 5S rRNA/L5/L18/L25 subcomplex. Contacts the 5S rRNA. Binds to the 5S rRNA independently of L5 and L18.

This is one of the proteins that binds to the 5S RNA in the ribosome where it forms part of the central protuberance. The polypeptide is Large ribosomal subunit protein bL25 (Francisella philomiragia subsp. philomiragia (strain ATCC 25017 / CCUG 19701 / FSC 153 / O#319-036)).